The sequence spans 507 residues: Cytochrome P450 4A14 (507 aa).

Residues 1-4 (MGFS) constitute a propeptide, removed in mature form. Glu-318 is a heme binding site. Ser-437 carries the phosphoserine modification. Heme is bound at residue Cys-454.

Belongs to the cytochrome P450 family. It depends on heme as a cofactor.

It localises to the endoplasmic reticulum membrane. The protein localises to the microsome membrane. The catalysed reaction is an omega-methyl-long-chain fatty acid + reduced [NADPH--hemoprotein reductase] + O2 = an omega-hydroxy-long-chain fatty acid + oxidized [NADPH--hemoprotein reductase] + H2O + H(+). The enzyme catalyses dodecanoate + reduced [NADPH--hemoprotein reductase] + O2 = (11R)-hydroxydodecanoate + oxidized [NADPH--hemoprotein reductase] + H2O + H(+). It catalyses the reaction dodecanoate + reduced [NADPH--hemoprotein reductase] + O2 = 12-hydroxydodecanoate + oxidized [NADPH--hemoprotein reductase] + H2O + H(+). It carries out the reaction tetradecanoate + reduced [NADPH--hemoprotein reductase] + O2 = 14-hydroxytetradecanoate + oxidized [NADPH--hemoprotein reductase] + H2O + H(+). Its pathway is lipid metabolism; fatty acid metabolism. Its function is as follows. A cytochrome P450 monooxygenase that catalyzes omega and omega-1 hydroxylation of saturated fatty acids. Exhibits preferential omega versus omega-1 regioselectivity and (R) versus (S) stereoselectivity for hydroxylation of dodecanoic (lauric) acid. Mechanistically, uses molecular oxygen inserting one oxygen atom into a substrate, and reducing the second into a water molecule, with two electrons provided by NADPH via cytochrome P450 reductase (CPR; NADPH-ferrihemoprotein reductase). This Rattus norvegicus (Rat) protein is Cytochrome P450 4A14.